Here is a 1342-residue protein sequence, read N- to C-terminus: DNA-directed RNA polymerase subunit beta (1342 aa).

The protein belongs to the RNA polymerase beta chain family. In terms of assembly, the RNAP catalytic core consists of 2 alpha, 1 beta, 1 beta' and 1 omega subunit. When a sigma factor is associated with the core the holoenzyme is formed, which can initiate transcription.

It catalyses the reaction RNA(n) + a ribonucleoside 5'-triphosphate = RNA(n+1) + diphosphate. DNA-dependent RNA polymerase catalyzes the transcription of DNA into RNA using the four ribonucleoside triphosphates as substrates. The chain is DNA-directed RNA polymerase subunit beta from Cronobacter sakazakii (strain ATCC BAA-894) (Enterobacter sakazakii).